Here is a 377-residue protein sequence, read N- to C-terminus: Chaperone MoxR1 (377 aa).

Residues Met1–Ala33 are disordered. A compositionally biased stretch (gly residues) spans Phe7 to Thr16. Residues Gly19–Ala33 are compositionally biased toward low complexity. Position 78–85 (Gly78–Thr85) interacts with ATP.

It belongs to the MoxR family. As to quaternary structure, interacts with RipA. Interacts with host Toll-like receptor 4 (TLR4).

In terms of biological role, displays ATP-enhanced chaperone activity. Required for the proper folding of the peptidoglycan endopeptidase RipA and its secretion through the TAT secretion system. In vitro, prevents thermal aggregation of MalZ protein and protects the functional activity of the restriction enzyme NdeI from thermal inactivation. Its function is as follows. Could be a moonlighting protein that uses a multipronged approach to dampen host-directed immunity for efficient replication, survival and pathogenesis. Can enhance virulence by inhibiting autophagy and apoptosis, and disrupting cellular bioenergetics. Binds and activates host TLR4 on the surface of macrophage cells, leading to the activation of the host NFKB and MAPK signaling cascades and enhanced secretion of proinflammatory cytokines. Inhibits autophagic flux via activation of PI3K-AKT-MTOR-ULK1 signaling cascade and represses apoptosis via inhibiting protooncogene c-FOS and MAPK JNK1/2. Also induces robust disruption of cellular bioenergetics by metabolic reprogramming to rewire the citric acid cycle intermediates for its benefit. The polypeptide is Chaperone MoxR1 (Mycobacterium tuberculosis (strain ATCC 25618 / H37Rv)).